Consider the following 501-residue polypeptide: Rhazimal synthase (501 aa).

The chain crosses the membrane as a helical span at residues 4–24 (MQLSFASAVVYSLIFFVFLLV). An N-linked (GlcNAc...) asparagine glycan is attached at N282. A heme-binding site is contributed by C442.

It belongs to the cytochrome P450 family. It depends on heme as a cofactor.

The protein resides in the membrane. The catalysed reaction is (19E)-geissoschizine + reduced [NADPH--hemoprotein reductase] + O2 = rhazimal + oxidized [NADPH--hemoprotein reductase] + 2 H2O + H(+). It carries out the reaction (19E)-geissoschizine + reduced [NADPH--hemoprotein reductase] + O2 = akuammicine + formate + oxidized [NADPH--hemoprotein reductase] + H2O + H(+). It functions in the pathway alkaloid biosynthesis. In terms of biological role, a cytochrome P450 monooxygenase involved in the biosynthesis of akuammilan monoterpene indole alkaloids (MIAs) natural products, components with various biological properties such as antidiabetic, antibacterial, anti-inflammatory, anticancer, and antimalarial activities. Catalyzes the conversion of geissoschizine to rhazimal. Can also, with lower efficiency, support the conversion of geissoschizine to akuammicine. The sequence is that of Rhazimal synthase from Alstonia scholaris (Dogbane).